A 95-amino-acid polypeptide reads, in one-letter code: Integration host factor subunit beta (95 aa).

Residues 57-76 (APRTGRNPKTGDKVDLEGKY) are disordered. Over residues 65–76 (KTGDKVDLEGKY) the composition is skewed to basic and acidic residues.

This sequence belongs to the bacterial histone-like protein family. As to quaternary structure, heterodimer of an alpha and a beta chain.

In terms of biological role, this protein is one of the two subunits of integration host factor, a specific DNA-binding protein that functions in genetic recombination as well as in transcriptional and translational control. This Enterobacter sp. (strain 638) protein is Integration host factor subunit beta.